The primary structure comprises 186 residues: Superoxide dismutase [Cu-Zn] (186 aa).

The first 20 residues, 1–20, serve as a signal peptide directing secretion; it reads MKKTVLALMFSCGMVASAFA. Cu cation-binding residues include histidine 79, histidine 81, and histidine 104. A disulfide bridge connects residues cysteine 86 and cysteine 182. Zn(2+) is bound by residues histidine 104, histidine 113, histidine 122, and aspartate 125. Residue histidine 160 coordinates Cu cation.

The protein belongs to the Cu-Zn superoxide dismutase family. As to quaternary structure, homodimer. Cu cation serves as cofactor. It depends on Zn(2+) as a cofactor.

Its subcellular location is the periplasm. It carries out the reaction 2 superoxide + 2 H(+) = H2O2 + O2. Functionally, destroys radicals which are normally produced within the cells and which are toxic to biological systems. This chain is Superoxide dismutase [Cu-Zn] (sodC), found in Pasteurella multocida (strain Pm70).